The following is a 313-amino-acid chain: Testis-expressed protein 264 (313 aa).

Topologically, residues 1–6 (MSDLLL) are lumenal. The chain crosses the membrane as a helical; Signal-anchor for type III membrane protein span at residues 7-31 (LGLIGGLTLLLLLTLLAFAGYSGLL). The Cytoplasmic portion of the chain corresponds to 32-313 (AGVEVSAGSP…EPTAPEKGKE (282 aa)). The segment at 193–313 (PEMKETEWKW…EPTAPEKGKE (121 aa)) is disordered. The span at 219–247 (DTMSDTSSVSLEVSPGSRETSAATLSPGA) shows a compositional bias: polar residues. Phosphoserine occurs at positions 239 and 244. Residues 251–263 (GWDDGDTRSEHSY) are compositionally biased toward basic and acidic residues. Residues 264–273 (SESGASGSSF) show a composition bias toward low complexity. Positions 273 to 276 (FEEL) match the LIR motif motif.

In terms of assembly, interacts (via the LIR motif) with ATG8 family proteins MAP1LC3A, MAP1LC3B, GABARAP and GABARAPL1. Interacts with VCP/p97; bridging VCP/p97 to covalent DNA-protein cross-links (DPCs). Interacts with TOP1 (when sumoylated).

It is found in the endoplasmic reticulum membrane. Its subcellular location is the cytoplasmic vesicle. The protein resides in the autophagosome. It localises to the cytoplasm. The protein localises to the cytosol. It is found in the nucleus. Its subcellular location is the chromosome. In terms of biological role, major reticulophagy (also called ER-phagy) receptor that acts independently of other candidate reticulophagy receptors to remodel subdomains of the endoplasmic reticulum into autophagosomes upon nutrient stress, which then fuse with lysosomes for endoplasmic reticulum turnover. The ATG8-containing isolation membrane (IM) cradles a tubular segment of TEX264-positive ER near a three-way junction, allowing the formation of a synapse of 2 juxtaposed membranes with trans interaction between the TEX264 and ATG8 proteins. Expansion of the IM would extend the capture of ER, possibly through a 'zipper-like' process involving continued trans TEX264-ATG8 interactions, until poorly understood mechanisms lead to the fission of relevant membranes and, ultimately, autophagosomal membrane closure. Also involved in the repair of covalent DNA-protein cross-links (DPCs) during DNA synthesis: acts by bridging VCP/p97 to covalent DNA-protein cross-links (DPCs) and initiating resolution of DPCs by SPRTN. The chain is Testis-expressed protein 264 from Homo sapiens (Human).